The primary structure comprises 1349 residues: Elongator complex protein 1 (1349 aa).

A phosphoserine mark is found at Ser529, Ser539, Ser551, Ser636, and Ser828. The mediates dimerization stretch occupies residues 919-1349 (QDVNVVYKSA…DFPKSHIVDF (431 aa)). 2 positions are modified to phosphoserine; by HRR25: Ser1198 and Ser1202. Ser1205 and Ser1209 each carry phosphoserine. Low complexity predominate over residues 1214–1228 (YTGKTGGTAKTGASR). The tract at residues 1214–1245 (YTGKTGGTAKTGASRRTAKNKRREERKRARGK) is disordered. The segment at 1228 to 1246 (RRTAKNKRREERKRARGKK) is required for binding to tRNA.

Belongs to the ELP1/IKA1 family. In terms of assembly, homodimer; dimerization promotes ELP1/IKI3 stability and elongator complex formation. Component of the elongator complex which consists of ELP1/IKI3, ELP2, ELP3, ELP4, ELP5/IKI1 and ELP6. The elongator complex is composed of two copies of the Elp123 subcomplex (composed of ELP1/IKI3, ELP2 and ELP3) and two copies of the Elp456 subcomplex (composed of ELP4, ELP5/IKI1 and ELP6). The Elp123 subcomplex forms a two-lobed scaffold, which binds the Elp456 subcomplex asymmetrically. In the complex, ELP1/IKI3 interacts with ELP2. In each lobe, ELP2 is tightly sandwiched between ELP1/IKI3 and ELP3. The Elp123 subcomplex binds tRNA through ELP1/IKI3 and ELP3 and can bind 2 tRNAs simultaneously. tRNA-binding induces conformational rearrangements which precisely position the targeted anticodon base in the active site. The Elp456 subcomplex binds tRNA and has ATPase activity. ELP1/IKI3 interacts with HRR25 and KTI12. Interacts with KTI11/DPH3. Post-translationally, phosphorylation promotes the tRNA modification function of the elongator complex.

The protein localises to the cytoplasm. The protein resides in the nucleus. It functions in the pathway tRNA modification; 5-methoxycarbonylmethyl-2-thiouridine-tRNA biosynthesis. In terms of biological role, component of the elongator complex which is required for multiple tRNA modifications, including mcm5U (5-methoxycarbonylmethyl uridine), mcm5s2U (5-methoxycarbonylmethyl-2-thiouridine), and ncm5U (5-carbamoylmethyl uridine). The elongator complex catalyzes formation of carboxymethyluridine in the wobble base at position 34 in tRNAs. Functions as a gamma-toxin target (TOT); disruption of the complex confers resistance to Kluyveromyces lactis toxin zymocin (pGKL1 killer toxin). May also be involved in sensitivity to Pichia inositovora toxin. ELP1/IKI3 binds to tRNA, mediating interaction of the elongator complex with tRNA. Independently, may be involved in polarized exocytosis. The polypeptide is Elongator complex protein 1 (IKI3) (Saccharomyces cerevisiae (strain ATCC 204508 / S288c) (Baker's yeast)).